Here is a 557-residue protein sequence, read N- to C-terminus: NADH-quinone oxidoreductase subunit C/D (557 aa).

The span at 1-13 (MSLEEQQSDDPAE) shows a compositional bias: acidic residues. Residues 1 to 20 (MSLEEQQSDDPAELESGVSR) are disordered. The tract at residues 1–174 (MSLEEQQSDD…ATLREHANPL (174 aa)) is NADH dehydrogenase I subunit C. Residues 184–557 (NTMYINIGPH…LDIVLGEVDR (374 aa)) form an NADH dehydrogenase I subunit D region. Lys517 participates in a covalent cross-link: Glycyl lysine isopeptide (Lys-Gly) (interchain with G-Cter in SAMP2).

The protein in the N-terminal section; belongs to the complex I 30 kDa subunit family. It in the C-terminal section; belongs to the complex I 49 kDa subunit family. NDH-1 is composed of 13 different subunits. Subunits NuoB, CD, E, F, and G constitute the peripheral sector of the complex.

The protein resides in the cell membrane. The enzyme catalyses a quinone + NADH + 5 H(+)(in) = a quinol + NAD(+) + 4 H(+)(out). In terms of biological role, NDH-1 shuttles electrons from NADH, via FMN and iron-sulfur (Fe-S) centers, to quinones in the respiratory chain. Couples the redox reaction to proton translocation (for every two electrons transferred, four hydrogen ions are translocated across the cytoplasmic membrane), and thus conserves the redox energy in a proton gradient. This is NADH-quinone oxidoreductase subunit C/D (nuoCD) from Haloferax volcanii (strain ATCC 29605 / DSM 3757 / JCM 8879 / NBRC 14742 / NCIMB 2012 / VKM B-1768 / DS2) (Halobacterium volcanii).